A 559-amino-acid polypeptide reads, in one-letter code: Urocanate hydratase (559 aa).

NAD(+) contacts are provided by residues 54–55, Gln132, 178–180, Glu198, Arg203, 244–245, 265–269, 275–276, and Tyr324; these read GG, GMG, NA, QTSAH, and YL. Cys412 is an active-site residue. NAD(+) is bound at residue Gly494.

The protein belongs to the urocanase family. It depends on NAD(+) as a cofactor.

The protein resides in the cytoplasm. It catalyses the reaction 4-imidazolone-5-propanoate = trans-urocanate + H2O. Its pathway is amino-acid degradation; L-histidine degradation into L-glutamate; N-formimidoyl-L-glutamate from L-histidine: step 2/3. Catalyzes the conversion of urocanate to 4-imidazolone-5-propionate. This chain is Urocanate hydratase, found in Azotobacter vinelandii (strain DJ / ATCC BAA-1303).